Here is a 695-residue protein sequence, read N- to C-terminus: Protein EARLY FLOWERING 3 (695 aa).

Over residues Met1–Leu11 the composition is skewed to basic and acidic residues. 5 disordered regions span residues Met1–Arg33, Arg48–Cys75, Arg136–Ser159, Glu216–Ser283, and Cys541–Arg653. Residues Thr54–Pro74 are compositionally biased toward polar residues. 3 stretches are compositionally biased toward basic and acidic residues: residues Glu216–Asn226, Gln234–Asp253, and Leu260–Ser283. The interval Ala261 to Tyr484 is interaction with ELF3. 2 stretches are compositionally biased toward polar residues: residues Pro551–Thr567 and Ala579–Lys588. Composition is skewed to low complexity over residues Gln598–Ser616 and Thr636–Arg653.

Interacts specifically with both Pr and Pfr forms of phytochrome B. Interacts with ELF4. May form a homodimer.

It is found in the nucleus. May be a transcription factor part of a circadian clock input pathway. Acts within a 'zeitnehmer' feedback loop and is involved in its own circadian regulation. Has no role in regulating circadian clock function in the dark. Part of a corepressor complex consisting of ELF4, ELF3, and LUX involved in the transcriptional regulation of APRR9. The activity of the protein may be decreased in long day conditions due to its interaction with phytochrome B (phyB). Can regulate the initiation of flowering independently of phyB. Also involved in responses to nematode parasitism, like the formation of the nematode feeding structure. In Arabidopsis thaliana (Mouse-ear cress), this protein is Protein EARLY FLOWERING 3 (ELF3).